Consider the following 337-residue polypeptide: Ribonucleoside-diphosphate reductase small chain (337 aa).

3 residues coordinate Fe cation: D85, E116, and H119. Y123 is an active-site residue. Fe cation is bound by residues E178, E212, and H215.

Belongs to the ribonucleoside diphosphate reductase small chain family. In terms of assembly, heterodimer of a large and a small subunit. The cofactor is Fe cation.

The catalysed reaction is a 2'-deoxyribonucleoside 5'-diphosphate + [thioredoxin]-disulfide + H2O = a ribonucleoside 5'-diphosphate + [thioredoxin]-dithiol. Functionally, provides the precursors necessary for DNA synthesis. Catalyzes the biosynthesis of deoxyribonucleotides from the corresponding ribonucleotides. This is Ribonucleoside-diphosphate reductase small chain (RNR2) from Trypanosoma brucei brucei.